Here is a 136-residue protein sequence, read N- to C-terminus: HetP-like commitment protein Alr2902 (136 aa).

Positions 94–109 (KASTQDLNQSNNSDYL) are enriched in polar residues. The disordered stretch occupies residues 94 to 120 (KASTQDLNQSNNSDYLTTPEPDKRGNI).

Belongs to the HetP family. As to quaternary structure, in bacterial two-hybrid assays interacts robustly with HetR and Alr3234 and weakly with itself, HetP and Asl1930.

In terms of biological role, delays heterocyst differentiation and commitment when nitrogen is limiting. Interplay between the 4 HetP paralogs controls the timing of commitment to heterocyst formation and its duration. Epistatic analysis show that the 3 paralogs act upstream of hetP to delay commitment (asl1930, alr3234) or inhibit development (alr2902). Asl1930 and Alr3234 must also attenuate the activity of Alr2902. When only this homolog is present no heterocysts are formed, showing it inhibits development. Ectopic expression partially complements a hetP deletion. The polypeptide is HetP-like commitment protein Alr2902 (Nostoc sp. (strain PCC 7120 / SAG 25.82 / UTEX 2576)).